The following is a 763-amino-acid chain: Phosphoglycerol transferase I (763 aa).

4 consecutive transmembrane segments (helical) span residues 1–21 (MSEL…AWKA), 26–46 (WWFA…ITLY), 77–97 (ILPG…LGWV), and 108–128 (VGYS…SPAF).

Belongs to the OpgB family.

It localises to the cell inner membrane. The enzyme catalyses a phosphatidylglycerol + a membrane-derived-oligosaccharide D-glucose = a 1,2-diacyl-sn-glycerol + a membrane-derived-oligosaccharide 6-(glycerophospho)-D-glucose.. It functions in the pathway glycan metabolism; osmoregulated periplasmic glucan (OPG) biosynthesis. Its function is as follows. Transfers a phosphoglycerol residue from phosphatidylglycerol to the membrane-bound nascent glucan backbones. This chain is Phosphoglycerol transferase I, found in Salmonella heidelberg (strain SL476).